Consider the following 521-residue polypeptide: MEVLESGEQSVLQWDRKLSELSEPGETEALMYHTHFSELLDEFSQNVLGQLLSDPFLSEKSESMEVEPSPTSPAPLIQAEHSYSLSEEPRTQSPFTHAATSDSFNDEEVESEKWYLSTEFPSATIKTEPITEEQPPGLVPSVTLTITAISTPFEKEESPLDMNAGGDSSCQTLIPKIKLEPHEVDQFLNFSPKEASVDQLHLPPTPPSSHSSDSEGSLSPNPRLHPFSLSQAHSPARAMPRGPSALSTSPLLTAPHKLQGSGPLVLTEEEKRTLVAEGYPIPTKLPLTKSEEKALKKIRRKIKNKISAQESRRKKKEYMDSLEKKVESCSTENLELRKKVEVLENTNRTLLQQLQKLQTLVMGKVSRTCKLAGTQTGTCLMVVVLCFAVAFGSFFQGYGPYPSATKMALPSQHPLSEPYTASVVRSRNLLIYEEHAPLEESSSPASAGELGGWDRGSSLLRASSGLEALPEVDLPHFLISNETSLEKSVLLELQQHLVSSKLEGNETLKVVELERRVNATF.

Residues 1-378 (MEVLESGEQS…CKLAGTQTGT (378 aa)) lie on the Cytoplasmic side of the membrane. Over residues 83 to 103 (YSLSEEPRTQSPFTHAATSDS) the composition is skewed to polar residues. The segment at 83-106 (YSLSEEPRTQSPFTHAATSDSFND) is disordered. Residue S93 is modified to Phosphoserine. A Glycyl lysine isopeptide (Lys-Gly) (interchain with G-Cter in SUMO2) cross-link involves residue K178. Position 191 is a phosphoserine (S191). The interval 196–264 (SVDQLHLPPT…PHKLQGSGPL (69 aa)) is disordered. Low complexity predominate over residues 208 to 220 (SSHSSDSEGSLSP). One can recognise a bZIP domain in the interval 294–357 (ALKKIRRKIK…RTLLQQLQKL (64 aa)). Residues 296–325 (KKIRRKIKNKISAQESRRKKKEYMDSLEKK) form a basic motif region. The interval 336–357 (LRKKVEVLENTNRTLLQQLQKL) is leucine-zipper. The chain crosses the membrane as a helical; Signal-anchor for type II membrane protein span at residues 379–399 (CLMVVVLCFAVAFGSFFQGYG). The Lumenal portion of the chain corresponds to 400-521 (PYPSATKMAL…ELERRVNATF (122 aa)). Positions 427-430 (RNLL) match the S1P recognition motif. 3 N-linked (GlcNAc...) asparagine glycosylation sites follow: N481, N505, and N518.

It belongs to the bZIP family. ATF subfamily. In terms of assembly, binds DNA as a dimer. In terms of processing, upon ER stress, translocated to the Golgi apparatus, where it is processed by regulated intramembrane proteolysis (RIP) to release the cytosol-facing N-terminal transcription factor domain. The cleavage is performed sequentially by site-1 and site-2 proteases (S1P/MBTPS1 and S2P/MBTPS2). N-glycosylated. Post-translationally, ubiquitinated by HRD1/SYVN1; undergoes 'Lys-48'-linked ubiquitination, followed by rapid proteasomal degradation under normal conditions. Upon ER stress, SYVN1 E3 ubiquitin-protein ligase dissociates from its substrate, ubiquitination does not occur and CREB3L2 is stabilized. As to expression, widely expressed, including in lung, bladder, ovary, testis and spleen. Highly expressed in chondrocytes.

Its subcellular location is the endoplasmic reticulum membrane. It is found in the nucleus. In terms of biological role, transcription factor involved in unfolded protein response (UPR). In the absence of endoplasmic reticulum (ER) stress, inserted into ER membranes, with N-terminal DNA-binding and transcription activation domains oriented toward the cytosolic face of the membrane. In response to ER stress, transported to the Golgi, where it is cleaved in a site-specific manner by resident proteases S1P/MBTPS1 and S2P/MBTPS2. The released N-terminal cytosolic domain is translocated to the nucleus to effect transcription of specific target genes. Plays a critical role in chondrogenesis by activating the transcription of SEC23A, which promotes the transport and secretion of cartilage matrix proteins, and possibly that of ER biogenesis-related genes. In a neuroblastoma cell line, protects cells from ER stress-induced death. In vitro activates transcription of target genes via direct binding to the CRE site. The sequence is that of Cyclic AMP-responsive element-binding protein 3-like protein 2 (Creb3l2) from Mus musculus (Mouse).